Reading from the N-terminus, the 251-residue chain is L-xylulose reductase (251 aa).

Residue 13 to 42 (LVTGASQGIGKEICLSLAKAGAQVIAFARN) coordinates NADP(+). Position 143 (Ser-143) interacts with substrate. Residue Tyr-156 is the Proton acceptor of the active site. Lys-160 lines the NADP(+) pocket.

It belongs to the short-chain dehydrogenases/reductases (SDR) family. Homotetramer. In terms of tissue distribution, expressed in intestine, gonad and spermatids (at protein level). Expressed in intestine, uterine seam, gonadal sheath cells, spermathecal-uterus valve and spermatids.

It localises to the cell membrane. The catalysed reaction is xylitol + NADP(+) = L-xylulose + NADPH + H(+). Strongly inhibited by 10% dimethyl sulfoxide. Catalyzes the NADPH-dependent reduction of L-xylulose, D-xylulose, L-(+) erythrulose, D-erythrose, D-threose, L-ribulose, 1,4-dibromo-2,3-butanedione and 2,3-heptanedione. Also active against isatin, 9,10-phenanthrenequinone, menadione, 2,3-hexaenadione and 3,4-hexahenadione. No activity observed when tested using NADH rather than NADPH. This is L-xylulose reductase from Caenorhabditis elegans.